A 215-amino-acid polypeptide reads, in one-letter code: Protein Syd (215 aa).

It belongs to the Syd family.

It is found in the cell inner membrane. Functionally, interacts with the SecY protein in vivo. May bind preferentially to an uncomplexed state of SecY, thus functioning either as a chelating agent for excess SecY in the cell or as a regulatory factor that negatively controls the translocase function. The polypeptide is Protein Syd (Shewanella piezotolerans (strain WP3 / JCM 13877)).